The following is a 403-amino-acid chain: Tyrosine--tRNA ligase (403 aa).

Positions 42–51 (PTAPDLHLGH) match the 'HIGH' region motif. The short motif at 226 to 230 (KMSKS) is the 'KMSKS' region element. Lysine 229 contributes to the ATP binding site. The S4 RNA-binding domain occupies 339–400 (LRIASLLTAA…GKRNFARVAL (62 aa)).

Belongs to the class-I aminoacyl-tRNA synthetase family. TyrS type 2 subfamily. Homodimer.

The protein resides in the cytoplasm. The enzyme catalyses tRNA(Tyr) + L-tyrosine + ATP = L-tyrosyl-tRNA(Tyr) + AMP + diphosphate + H(+). Catalyzes the attachment of tyrosine to tRNA(Tyr) in a two-step reaction: tyrosine is first activated by ATP to form Tyr-AMP and then transferred to the acceptor end of tRNA(Tyr). This Xanthomonas campestris pv. campestris (strain ATCC 33913 / DSM 3586 / NCPPB 528 / LMG 568 / P 25) protein is Tyrosine--tRNA ligase.